The chain runs to 337 residues: Anthranilate phosphoribosyltransferase (337 aa).

Residues Gly-78, 81–82 (GD), Thr-86, 88–91 (NIST), 106–114 (KHGNRSVSS), and Ser-118 contribute to the 5-phospho-alpha-D-ribose 1-diphosphate site. Gly-78 lines the anthranilate pocket. Ser-90 is a Mg(2+) binding site. Asn-109 serves as a coordination point for anthranilate. Anthranilate is bound at residue Arg-164. Residues Asp-222 and Glu-223 each contribute to the Mg(2+) site.

The protein belongs to the anthranilate phosphoribosyltransferase family. Homodimer. It depends on Mg(2+) as a cofactor.

It catalyses the reaction N-(5-phospho-beta-D-ribosyl)anthranilate + diphosphate = 5-phospho-alpha-D-ribose 1-diphosphate + anthranilate. The protein operates within amino-acid biosynthesis; L-tryptophan biosynthesis; L-tryptophan from chorismate: step 2/5. Functionally, catalyzes the transfer of the phosphoribosyl group of 5-phosphorylribose-1-pyrophosphate (PRPP) to anthranilate to yield N-(5'-phosphoribosyl)-anthranilate (PRA). This is Anthranilate phosphoribosyltransferase from Idiomarina loihiensis (strain ATCC BAA-735 / DSM 15497 / L2-TR).